The following is a 136-amino-acid chain: UPF0216 protein PYRAB16100 (136 aa).

Belongs to the UPF0216 family.

The polypeptide is UPF0216 protein PYRAB16100 (Pyrococcus abyssi (strain GE5 / Orsay)).